A 718-amino-acid chain; its full sequence is Polyribonucleotide nucleotidyltransferase (718 aa).

Asp-493 and Asp-499 together coordinate Mg(2+). Residues 560-619 enclose the KH domain; it reads PRVIKKQIDPDKIRNVIGPGGKMINKIIDETGVKIDIEPDGLIYISSSDAEQAEQAIKAI. The S1 motif domain maps to 629–697; the sequence is GEVYLGKVVR…ERGRINLSRK (69 aa). The segment at 695 to 718 is disordered; it reads SRKQALGEEDGKTNNDDKKSTKKT. Residues 699-718 show a composition bias toward basic and acidic residues; sequence ALGEEDGKTNNDDKKSTKKT.

This sequence belongs to the polyribonucleotide nucleotidyltransferase family. It depends on Mg(2+) as a cofactor.

The protein resides in the cytoplasm. The enzyme catalyses RNA(n+1) + phosphate = RNA(n) + a ribonucleoside 5'-diphosphate. Its function is as follows. Involved in mRNA degradation. Catalyzes the phosphorolysis of single-stranded polyribonucleotides processively in the 3'- to 5'-direction. In Natranaerobius thermophilus (strain ATCC BAA-1301 / DSM 18059 / JW/NM-WN-LF), this protein is Polyribonucleotide nucleotidyltransferase.